The chain runs to 97 residues: Protein RALF-like 2 (97 aa).

Residues 1-25 form the signal peptide; the sequence is MEARHMLVTILLLSFVFMNIMKVEA. Intrachain disulfides connect C42-C49 and C61-C67.

Belongs to the plant rapid alkalinization factor (RALF) family.

The protein resides in the secreted. Functionally, cell signaling peptide that may regulate plant stress, growth, and development. Mediates a rapid alkalinization of extracellular space by mediating a transient increase in the cytoplasmic Ca(2+) concentration leading to a calcium-dependent signaling events through a cell surface receptor and a concomitant activation of some intracellular mitogen-activated protein kinases. The protein is Protein RALF-like 2 (RALFL2) of Arabidopsis thaliana (Mouse-ear cress).